The chain runs to 441 residues: EMI domain-containing protein 1 (441 aa).

Residues 1-22 (MGGPRAWALLCLGLLLPGGGAA) form the signal peptide. The EMI domain maps to 33–106 (RRNWCSYVVT…PGHSGVSCEE (74 aa)). Cystine bridges form between Cys37/Cys96, Cys62/Cys68, and Cys95/Cys104. An O-linked (Fuc) threonine glycan is attached at Thr42. A glycan (N-linked (GlcNAc...) asparagine) is linked at Asn51. The N-linked (GlcNAc...) asparagine glycan is linked to Asn136. 2 disordered regions span residues 162-371 (QPVP…KSHW) and 405-441 (SGAG…DERG). 2 stretches are compositionally biased toward pro residues: residues 163–184 (PVPP…PPAQ) and 222–231 (PPGPQGPPGS). Residues 179-368 (GPPPAQGSPG…PGPKGDPGEK (190 aa)) form the Collagen-like domain. Low complexity predominate over residues 232 to 243 (PGRAGAVGTPGE). Residues 244–264 (RGPPGPPGPPGPPGPPAPVGP) show a composition bias toward pro residues. Residues 277–288 (LSNTFTETNNHW) are compositionally biased toward polar residues. Positions 292 to 311 (PTGPPGPPGPMGPPGPPGPT) are enriched in pro residues. Composition is skewed to basic and acidic residues over residues 335–344 (PGEKGERGLR) and 359–371 (PGPK…KSHW).

As to quaternary structure, homo- or heteromers. O-fucosylated at Thr-42 within the EMI domain by FUT10/POFUT3 and FUT11/POFUT4.

It is found in the secreted. The protein resides in the extracellular space. Its subcellular location is the extracellular matrix. In Homo sapiens (Human), this protein is EMI domain-containing protein 1 (EMID1).